A 2038-amino-acid polypeptide reads, in one-letter code: Non-reducing polyketide synthase ZEA1 (2038 aa).

The segment at 9 to 246 (LLFGDQTDSW…NELNIHALQH (238 aa)) is N-terminal acylcarrier protein transacylase domain (SAT). The region spanning 364–794 (PGRIAIVGMA…GGNACILLED (431 aa)) is the Ketosynthase family 3 (KS3) domain. Residues Cys537, His672, and His711 each act as for beta-ketoacyl synthase activity in the active site. The interval 888–1172 (VFVFTGQGSH…VCSSFVRATL (285 aa)) is malonyl-CoA:ACP transacylase (MAT) domain. Ser979 functions as the For acyl/malonyl transferase activity in the catalytic mechanism. The interval 1221–1572 (SLLNLPTYAW…HFHEVENAVL (352 aa)) is product template (PT) domain. The segment at 1254–1405 (HETFKANIST…GQLIQARWDK (152 aa)) is N-terminal hotdog fold. The region spanning 1254-1573 (HETFKANIST…FHEVENAVLD (320 aa)) is the PKS/mFAS DH domain. Positions 1425–1573 (ISHRLQPQIL…FHEVENAVLD (149 aa)) are C-terminal hotdog fold. The Carrier domain maps to 1616 to 1693 (QSDAHVLDSI…DLRRVFAPKS (78 aa)). The residue at position 1653 (Ser1653) is an O-(pantetheine 4'-phosphoryl)serine. A disordered region spans residues 1700–1738 (NDLSRPSLVDDTSQALQSSGSESFDQPPTSVTSTSDSGS). A compositionally biased stretch (polar residues) spans 1709–1737 (DDTSQALQSSGSESFDQPPTSVTSTSDSG). Positions 1778–1882 (TGTIATYIHL…PRSKTVEDKN (105 aa)) are thioesterase (TE) domain. The active-site For thioesterase activity is the His2021.

It participates in mycotoxin biosynthesis. Its function is as follows. Non-reducing polyketide synthase; part of the gene cluster that mediates the biosynthesis of zearalenone (ZEA), a nonsteroid estrogen that is a contaminant of cereal grains and causes estrogenic disorders in humans and animals. The ZEA backbone is synthesized from a single acetyl-CoA molecule and eight malonyl-CoA molecules. The reducing polyketide synthase ZEA2 is proposed to synthesize a reduced hexaketide intermediate by using different combinations of its reductive domains during each round of condensation. The hexaketide thioester is then transacylated to the non-reducing polyketide synthase ZEA1 and is further condensed with three malonyl-CoAs without reductive tailoring to yield a mixed reduced/unreduced nonaketide. ZEA1 must be able to interact with ZEA2 to facilitate starter-unit acyltransfer and initiate polyketide biosynthesis. ZEA1 also mediates the required C2-C7 cyclization to form the resorcylate core and catalyzes the formation of the macrolactone. ZEA1 exhibits broad starter-unit specificities toward fatty acyl-CoAs ranging in sizes between C6 and C16 and displays the highest activity toward decanoyl-CoA. ZEB1 is then responsible for the chemical conversion of beta-zearalenonol (beta-ZOL) to ZEA in the biosynthetic pathway. The sequence is that of Non-reducing polyketide synthase ZEA1 from Gibberella zeae (strain ATCC MYA-4620 / CBS 123657 / FGSC 9075 / NRRL 31084 / PH-1) (Wheat head blight fungus).